The chain runs to 134 residues: Complexin-1 (134 aa).

The tract at residues 1–112 (MEFVMKQALG…PGCGDAAEEE (112 aa)) is disordered. Over residues 15-81 (DMGKMLGGDE…IKKKEEREAE (67 aa)) the composition is skewed to basic and acidic residues. Positions 29–69 (DAAKKEEERQEALRQEEEERKAKYAKMEAEREAVRQGIRDK) form a coiled coil. Residues 48-70 (RKAKYAKMEAEREAVRQGIRDKY) form an interaction with the SNARE complex region.

It belongs to the complexin/synaphin family. Binds to the SNARE core complex containing SNAP25, VAMP2 and STX1A.

The protein resides in the cytoplasm. It is found in the cytosol. The protein localises to the perikaryon. Its subcellular location is the presynapse. Its function is as follows. Positively regulates a late step in synaptic vesicle exocytosis. Organizes the SNAREs into a cross-linked zigzag topology that, when interposed between the vesicle and plasma membranes, is incompatible with fusion, thereby preventing SNAREs from releasing neurotransmitters until an action potential arrives at the synapse. Also involved in glucose-induced secretion of insulin by pancreatic beta-cells. The chain is Complexin-1 (CPLX1) from Bos taurus (Bovine).